A 154-amino-acid chain; its full sequence is MAIELDLQLAVENEEGLPSQQDFQLWLDKTIPLFQPQAEVTIRIVDEKESHALNHEYRGKDKPTNVLSFPFEAPPGMEIDLLGDLIICRQVVEKEAIEQNKPLLAHWAHMVVHGSLHLLGYDHIEDDEAEEMESLETEIMQGMGYEDPYIAEKE.

The Zn(2+) site is built by H113, H117, and H123.

The protein belongs to the endoribonuclease YbeY family. It depends on Zn(2+) as a cofactor.

It localises to the cytoplasm. Functionally, single strand-specific metallo-endoribonuclease involved in late-stage 70S ribosome quality control and in maturation of the 3' terminus of the 16S rRNA. This Vibrio parahaemolyticus serotype O3:K6 (strain RIMD 2210633) protein is Endoribonuclease YbeY.